A 546-amino-acid chain; its full sequence is Sodium/hydrogen exchanger 2 (546 aa).

The Cytoplasmic portion of the chain corresponds to 1 to 21 (MTMFASLTSKMLSVSTSDHAS). The helical transmembrane segment at 22 to 42 (VVSLNLFVALLCACIVIGHLL) threads the bilayer. At 43-47 (EENRW) the chain is on the vacuolar side. The helical transmembrane segment at 48–68 (MNESITALLIGLGTGVVILLI) threads the bilayer. Residues 69–75 (SRGKNSH) lie on the Cytoplasmic side of the membrane. Residues 76–96 (LLVFSEDLFFIYLLPPIIFNA) constitute an intramembrane region (helical). Over 97–111 (GFQVKKKQFFRNFVT) the chain is Cytoplasmic. A helical membrane pass occupies residues 112–132 (IMAFGAIGTVVSCTIISLGAI). At 133 to 148 (QFFKKLDIGTFDLGDF) the chain is on the vacuolar side. 2 intramembrane regions (helical) span residues 149–168 (LAIG…QVLN) and 174–194 (LLYS…VVLF). At 195–218 (NAIQSFDLTHLNHEAAFQFLGNFF) the chain is on the vacuolar side. Residues 219–239 (YLFLLSTGLGVATGLISAYVI) form a helical membrane-spanning segment. Topologically, residues 240–264 (KKLYFGRHSTDREVALMMLMAYLSY) are cytoplasmic. The helical transmembrane segment at 265–285 (MLAELFALSGILTVFFCGIVM) threads the bilayer. Residues 286–304 (SHYTWHNVTESSRITTKHA) lie on the Vacuolar side of the membrane. Asn-292 is a glycosylation site (N-linked (GlcNAc...) asparagine). Residues 305-325 (FATLSFLAETFIFLYVGMDAL) traverse the membrane as a helical segment. Residues 326–344 (DIEKWRFVSDSPGTSVAVS) lie on the Cytoplasmic side of the membrane. A helical membrane pass occupies residues 345 to 365 (SILMGLVMLGRAAFVFPLSFL). Over 366–381 (SNLAKKHQSEKISIKQ) the chain is Vacuolar. A helical membrane pass occupies residues 382–402 (QVVIWWAGLMRGAVSMALAYN). The Cytoplasmic segment spans residues 403–415 (KFTRSGHTELRGN). A helical membrane pass occupies residues 416–436 (AIMITSTITVCLFSTMVFGML). Residues 437-546 (TKPLIRYLMP…ERSSHDLSKP (110 aa)) lie on the Vacuolar side of the membrane.

Belongs to the monovalent cation:proton antiporter 1 (CPA1) transporter (TC 2.A.36) family. As to expression, expressed in roots and shoots.

It is found in the vacuole membrane. It catalyses the reaction Na(+)(in) + H(+)(out) = Na(+)(out) + H(+)(in). The enzyme catalyses K(+)(in) + H(+)(out) = K(+)(out) + H(+)(in). In terms of biological role, acts in low affinity electroneutral exchange of protons for cations such as Na(+) or K(+) across membranes. May also exchange Li(+) and Cs(+) with a lower affinity. Involved in vacuolar ion compartmentalization necessary for cell volume regulation and cytoplasmic Na(+) detoxification. This chain is Sodium/hydrogen exchanger 2 (NHX2), found in Arabidopsis thaliana (Mouse-ear cress).